Here is a 120-residue protein sequence, read N- to C-terminus: Ribosome-binding factor A (120 aa).

It belongs to the RbfA family. In terms of assembly, monomer. Binds 30S ribosomal subunits, but not 50S ribosomal subunits or 70S ribosomes.

It localises to the cytoplasm. In terms of biological role, one of several proteins that assist in the late maturation steps of the functional core of the 30S ribosomal subunit. Associates with free 30S ribosomal subunits (but not with 30S subunits that are part of 70S ribosomes or polysomes). Required for efficient processing of 16S rRNA. May interact with the 5'-terminal helix region of 16S rRNA. This Rickettsia conorii (strain ATCC VR-613 / Malish 7) protein is Ribosome-binding factor A.